A 545-amino-acid chain; its full sequence is ATP synthase subunit alpha, mitochondrial (545 aa).

A mitochondrion-targeting transit peptide spans 1–35 (MLARTAAIRSLSRTLINSTKAARPAAAALASTRRL). Phosphoserine occurs at positions 57 and 178. 206–213 (GDRQTGKT) contacts ATP.

It belongs to the ATPase alpha/beta chains family. In terms of assembly, F-type ATPases have 2 components, CF(1) - the catalytic core - and CF(0) - the membrane proton channel. CF(1) has five subunits: alpha(3), beta(3), gamma(1), delta(1), epsilon(1). CF(0) has three main subunits: a, b and c.

It is found in the mitochondrion inner membrane. In terms of biological role, mitochondrial membrane ATP synthase (F(1)F(0) ATP synthase or Complex V) produces ATP from ADP in the presence of a proton gradient across the membrane which is generated by electron transport complexes of the respiratory chain. F-type ATPases consist of two structural domains, F(1) - containing the extramembraneous catalytic core, and F(0) - containing the membrane proton channel, linked together by a central stalk and a peripheral stalk. During catalysis, ATP synthesis in the catalytic domain of F(1) is coupled via a rotary mechanism of the central stalk subunits to proton translocation. Subunits alpha and beta form the catalytic core in F(1). Rotation of the central stalk against the surrounding alpha(3)beta(3) subunits leads to hydrolysis of ATP in three separate catalytic sites on the beta subunits. Subunit alpha does not bear the catalytic high-affinity ATP-binding sites. The protein is ATP synthase subunit alpha, mitochondrial (ATP1) of Saccharomyces cerevisiae (strain ATCC 204508 / S288c) (Baker's yeast).